The sequence spans 329 residues: U5 small nuclear ribonucleoprotein TSSC4 (329 aa).

Disordered stretches follow at residues 1-88 (MAEA…MSST) and 104-156 (ARRA…PDYV). Low complexity predominate over residues 22-41 (DTLPSDTVSLSDSDSDLSLP). 6 positions are modified to phosphoserine: serine 60, serine 67, serine 86, serine 132, serine 143, and serine 146. Residues 77 to 104 (VQPFHLRGMSSTFSQRSRDIFDCLEGAA) are hom2; mediates interaction with the U5 snRNP complexes and required for spliceosomal tri-snRNP complex assembly. Positions 149-316 (VPPVPDYVAH…SRKRSRDHFR (168 aa)) are interaction with SNRNP200. Residues 150–186 (PPVPDYVAHPERWTKYSLEDVTEVSEQSNQATALAFL) form a hom3; mediates interaction with the U5 snRNP complexes region. The hom4; necessary for interaction with the PRPF19 complex and required for spliceosomal tri-snRNP complex assembly stretch occupies residues 201–250 (FNQDPSSCGEGRVIFTKPVRGVEARHERKRVLGKVGEPGRGGLGNPATDR). Lysine 217 carries the post-translational modification N6-acetyllysine. Positions 221 to 329 (GVEARHERKR…SSPEDPGAEV (109 aa)) are disordered. Serine 265 is modified (phosphoserine). Basic residues predominate over residues 306–317 (GSRKRSRDHFRN). Serine 321 is modified (phosphoserine).

The protein belongs to the TSSC4 family. In terms of assembly, interacts in a RNA-independent manner with distinct U5 snRNP-containing complexes, the mono-U5 snRNP and the post-splicing U5 snRNP-PRPF19 complex. Interacts with SNRNP200; the interaction is direct, excludes recruitment of C9ORF78 and WBP4 to SNRNP200 and negatively regulates its RNA helicase activity. Interacts with PRPF8; the interaction is direct. In terms of tissue distribution, expressed in fetal brain, lung, liver and kidney. Widely expressed in adult tissues.

It is found in the nucleus. The protein localises to the cytoplasm. Its function is as follows. Protein associated with the U5 snRNP, during its maturation and its post-splicing recycling and which is required for spliceosomal tri-snRNP complex assembly in the nucleus. Has a molecular sequestering activity and transiently hinders SNRNP200 binding sites for constitutive splicing factors that intervene later during the assembly of the spliceosome and splicing. Together with its molecular sequestering activity, may also function as a molecular adapter and placeholder, coordinating the assembly of the U5 snRNP and its association with the U4/U6 di-snRNP. The chain is U5 small nuclear ribonucleoprotein TSSC4 from Homo sapiens (Human).